The sequence spans 484 residues: Glycogen synthase (484 aa).

ADP-alpha-D-glucose is bound at residue Lys18.

The protein belongs to the glycosyltransferase 1 family. Bacterial/plant glycogen synthase subfamily.

The enzyme catalyses [(1-&gt;4)-alpha-D-glucosyl](n) + ADP-alpha-D-glucose = [(1-&gt;4)-alpha-D-glucosyl](n+1) + ADP + H(+). The protein operates within glycan biosynthesis; glycogen biosynthesis. Its function is as follows. Synthesizes alpha-1,4-glucan chains using ADP-glucose. The sequence is that of Glycogen synthase from Vibrio cholerae serotype O1 (strain ATCC 39541 / Classical Ogawa 395 / O395).